The primary structure comprises 517 residues: UDP-N-acetylmuramoyl-L-alanyl-D-glutamate--2,6-diaminopimelate ligase (517 aa).

Leu-34 and Ser-36 together coordinate UDP-N-acetyl-alpha-D-muramoyl-L-alanyl-D-glutamate. 122-128 (GTSGKTT) contributes to the ATP binding site. UDP-N-acetyl-alpha-D-muramoyl-L-alanyl-D-glutamate-binding positions include 164-165 (TT), Ser-191, and Arg-199. Lys-231 is subject to N6-carboxylysine. Residues Arg-394, 418–421 (DNPR), Gly-476, and Glu-480 each bind meso-2,6-diaminopimelate. The Meso-diaminopimelate recognition motif signature appears at 418–421 (DNPR).

The protein belongs to the MurCDEF family. MurE subfamily. Requires Mg(2+) as cofactor. Carboxylation is probably crucial for Mg(2+) binding and, consequently, for the gamma-phosphate positioning of ATP.

The protein resides in the cytoplasm. It carries out the reaction UDP-N-acetyl-alpha-D-muramoyl-L-alanyl-D-glutamate + meso-2,6-diaminopimelate + ATP = UDP-N-acetyl-alpha-D-muramoyl-L-alanyl-gamma-D-glutamyl-meso-2,6-diaminopimelate + ADP + phosphate + H(+). It participates in cell wall biogenesis; peptidoglycan biosynthesis. Catalyzes the addition of meso-diaminopimelic acid to the nucleotide precursor UDP-N-acetylmuramoyl-L-alanyl-D-glutamate (UMAG) in the biosynthesis of bacterial cell-wall peptidoglycan. This is UDP-N-acetylmuramoyl-L-alanyl-D-glutamate--2,6-diaminopimelate ligase from Corynebacterium glutamicum (strain ATCC 13032 / DSM 20300 / JCM 1318 / BCRC 11384 / CCUG 27702 / LMG 3730 / NBRC 12168 / NCIMB 10025 / NRRL B-2784 / 534).